The chain runs to 203 residues: Imidazole glycerol phosphate synthase subunit HisH (203 aa).

One can recognise a Glutamine amidotransferase type-1 domain in the interval M1–L203. The active-site Nucleophile is C79. Residues H181 and E183 contribute to the active site.

Heterodimer of HisH and HisF.

The protein localises to the cytoplasm. The enzyme catalyses 5-[(5-phospho-1-deoxy-D-ribulos-1-ylimino)methylamino]-1-(5-phospho-beta-D-ribosyl)imidazole-4-carboxamide + L-glutamine = D-erythro-1-(imidazol-4-yl)glycerol 3-phosphate + 5-amino-1-(5-phospho-beta-D-ribosyl)imidazole-4-carboxamide + L-glutamate + H(+). It catalyses the reaction L-glutamine + H2O = L-glutamate + NH4(+). It functions in the pathway amino-acid biosynthesis; L-histidine biosynthesis; L-histidine from 5-phospho-alpha-D-ribose 1-diphosphate: step 5/9. IGPS catalyzes the conversion of PRFAR and glutamine to IGP, AICAR and glutamate. The HisH subunit catalyzes the hydrolysis of glutamine to glutamate and ammonia as part of the synthesis of IGP and AICAR. The resulting ammonia molecule is channeled to the active site of HisF. The sequence is that of Imidazole glycerol phosphate synthase subunit HisH from Caldanaerobacter subterraneus subsp. tengcongensis (strain DSM 15242 / JCM 11007 / NBRC 100824 / MB4) (Thermoanaerobacter tengcongensis).